Reading from the N-terminus, the 116-residue chain is Iron-sulfur cluster insertion protein ErpA (116 aa).

Iron-sulfur cluster is bound by residues Cys-44, Cys-108, and Cys-110.

It belongs to the HesB/IscA family. As to quaternary structure, homodimer. The cofactor is iron-sulfur cluster.

Functionally, required for insertion of 4Fe-4S clusters for at least IspG. The polypeptide is Iron-sulfur cluster insertion protein ErpA (Ectopseudomonas mendocina (strain ymp) (Pseudomonas mendocina)).